Reading from the N-terminus, the 141-residue chain is Histone H2B (141 aa).

Over residues 1-10 (MAPKAAEKKP) the composition is skewed to basic and acidic residues. A disordered region spans residues 1–49 (MAPKAAEKKPSTGGKAPAGGKAPAEKKEAGKKTAAAASGDKKKRGKTRK). An N6-acetyllysine; alternate mark is found at Lys-8 and Lys-9. Glycyl lysine isopeptide (Lys-Gly) (interchain with G-Cter in SUMO); alternate cross-links involve residues Lys-8 and Lys-9. The segment covering 11–22 (STGGKAPAGGKA) has biased composition (low complexity). N6-acetyllysine is present on Lys-15. Position 26 is an N6-acetyllysine; alternate (Lys-26). Residue Lys-26 forms a Glycyl lysine isopeptide (Lys-Gly) (interchain with G-Cter in SUMO); alternate linkage. Residue Lys-27 forms a Glycyl lysine isopeptide (Lys-Gly) (interchain with G-Cter in SUMO) linkage. Lys-135 participates in a covalent cross-link: Glycyl lysine isopeptide (Lys-Gly) (interchain with G-Cter in ubiquitin).

The protein belongs to the histone H2B family. The nucleosome is a histone octamer containing two molecules each of H2A, H2B, H3 and H4 assembled in one H3-H4 heterotetramer and two H2A-H2B heterodimers. The octamer wraps approximately 147 bp of DNA. Post-translationally, monoubiquitinated by the ubc2-bre1 complex to form H2BK123ub1. H2BK123ub1 gives a specific tag for epigenetic transcriptional activation and is also prerequisite for H3K4me and H3K79me formation. H2BK123ub1 also modulates the formation of double-strand breaks during meiosis and is a prerequisite for DNA-damage checkpoint activation. Acetylated by gcn5 to form H2BK11ac and H2BK16ac. H2BK16ac can also be formed by esa1. Acetylation of N-terminal lysines and particularly formation of H2BK11acK16ac has a positive effect on transcription. In terms of processing, sumoylation to form H2BK6su or H2BK7su, and probably also H2BK16su or H2BK17su, occurs preferentially near the telomeres and represses gene transcription.

It is found in the nucleus. It localises to the chromosome. Core component of nucleosome. Nucleosomes wrap and compact DNA into chromatin, limiting DNA accessibility to the cellular machineries which require DNA as a template. Histones thereby play a central role in transcription regulation, DNA repair, DNA replication and chromosomal stability. DNA accessibility is regulated via a complex set of post-translational modifications of histones, also called histone code, and nucleosome remodeling. This Aspergillus oryzae (strain ATCC 42149 / RIB 40) (Yellow koji mold) protein is Histone H2B (htb1).